A 955-amino-acid chain; its full sequence is Calsyntenin-2 (955 aa).

Positions 1 to 20 (MLPGRLCWVPLLLALGVGSG) are cleaved as a signal peptide. The Extracellular portion of the chain corresponds to 21–831 (SGGGGDSRQR…SIQHSSVVPS (811 aa)). Cadherin domains lie at 44 to 160 (IETS…APTF) and 161 to 280 (KEPA…MPLF). N56 and N98 each carry an N-linked (GlcNAc...) asparagine glycan. N342, N374, N716, and N729 each carry an N-linked (GlcNAc...) asparagine glycan. The chain crosses the membrane as a helical span at residues 832–852 (IATVVIIISVCMLVFVVAMGV). Over 853 to 955 (YRVRIAHQHF…LEWDDSTLPY (103 aa)) the chain is Cytoplasmic. Positions 887–955 (PMEKHEGPGH…LEWDDSTLPY (69 aa)) are disordered. Residues 888–898 (MEKHEGPGHGE) are compositionally biased toward basic and acidic residues. 2 stretches are compositionally biased toward acidic residues: residues 899–913 (DETEGEEEEEAEEEM) and 920–929 (DDSEEEEEEE).

It belongs to the calsyntenin family. Post-translationally, proteolytically processed under normal cellular conditions. A primary zeta-cleavage generates a large extracellular (soluble) N-terminal domain (sAlc) and a short C-terminal transmembrane fragment (CTF1). A secondary cleavage catalyzed by gamma-secretase within the transmembrane domain releases the beta-Alc-gamma chain in the extracellular milieu and produces an intracellular fragment (AlcICD). This processing is strongly suppressed in the tripartite complex formed with APBA2 and APP, which seems to prevent the association with PSEN1. Restricted to the brain.

The protein localises to the postsynaptic cell membrane. Its subcellular location is the endoplasmic reticulum membrane. The protein resides in the golgi apparatus membrane. It localises to the cell projection. It is found in the dendrite. Functionally, postsynaptic adhesion molecule that binds to presynaptic neurexins to mediate synapse formation, and which is involved in learning and memory. Promotes synapse development by acting as a cell adhesion molecule at the postsynaptic membrane, which associates with neurexin-alpha at the presynaptic membrane. The chain is Calsyntenin-2 from Homo sapiens (Human).